The sequence spans 464 residues: NADH-ubiquinone oxidoreductase chain 4 (464 aa).

13 helical membrane-spanning segments follow: residues 1-21, 63-83, 98-118, 119-139, 152-172, 197-217, 227-247, 261-281, 288-308, 314-334, 355-375, 389-409, and 443-463; these read MMIT…VIPQ, SISA…LIAS, FIII…ALEL, LLFY…ITRW, FMFY…AIYI, IWWA…GFHL, PVAG…YGLI, LSLA…IICV, ALIA…IFSS, NGAL…FSLA, ILPL…GLPP, LIAW…FGAI, and LHTL…ITWL.

It belongs to the complex I subunit 4 family.

The protein localises to the mitochondrion membrane. It carries out the reaction a ubiquinone + NADH + 5 H(+)(in) = a ubiquinol + NAD(+) + 4 H(+)(out). Functionally, core subunit of the mitochondrial membrane respiratory chain NADH dehydrogenase (Complex I) that is believed to belong to the minimal assembly required for catalysis. Complex I functions in the transfer of electrons from NADH to the respiratory chain. The immediate electron acceptor for the enzyme is believed to be ubiquinone. This Paracentrotus lividus (Common sea urchin) protein is NADH-ubiquinone oxidoreductase chain 4 (ND4).